Consider the following 260-residue polypeptide: Tryptophan 2,3-dioxygenase (260 aa).

Residues 34–38 (FIVIH) and Arg100 each bind substrate. His219 provides a ligand contact to heme. Thr233 serves as a coordination point for substrate.

It belongs to the tryptophan 2,3-dioxygenase family. In terms of assembly, homotetramer. Requires heme as cofactor.

The enzyme catalyses L-tryptophan + O2 = N-formyl-L-kynurenine. It participates in amino-acid degradation; L-tryptophan degradation via kynurenine pathway; L-kynurenine from L-tryptophan: step 1/2. Heme-dependent dioxygenase that catalyzes the oxidative cleavage of the L-tryptophan (L-Trp) pyrrole ring and converts L-tryptophan to N-formyl-L-kynurenine. Catalyzes the oxidative cleavage of the indole moiety. The sequence is that of Tryptophan 2,3-dioxygenase from Herpetosiphon aurantiacus (strain ATCC 23779 / DSM 785 / 114-95).